A 156-amino-acid polypeptide reads, in one-letter code: MNINLTLIGQSLTFIAFILFCMKYVWPQLIAMMEEREKRIAEGLEAADRADKDLELAQKKAGKQLTEAKEQAATIVEQANKRGNQIVEEAKEAAVAEGERIKAAAQAEIERQVAQAREELRGKVAALAIQGAEKVLGTTVDAKAHSEMLDKLAAEL.

A helical membrane pass occupies residues 7–29; it reads LIGQSLTFIAFILFCMKYVWPQL.

Belongs to the ATPase B chain family. F-type ATPases have 2 components, F(1) - the catalytic core - and F(0) - the membrane proton channel. F(1) has five subunits: alpha(3), beta(3), gamma(1), delta(1), epsilon(1). F(0) has three main subunits: a(1), b(2) and c(10-14). The alpha and beta chains form an alternating ring which encloses part of the gamma chain. F(1) is attached to F(0) by a central stalk formed by the gamma and epsilon chains, while a peripheral stalk is formed by the delta and b chains.

It localises to the cell inner membrane. Functionally, f(1)F(0) ATP synthase produces ATP from ADP in the presence of a proton or sodium gradient. F-type ATPases consist of two structural domains, F(1) containing the extramembraneous catalytic core and F(0) containing the membrane proton channel, linked together by a central stalk and a peripheral stalk. During catalysis, ATP synthesis in the catalytic domain of F(1) is coupled via a rotary mechanism of the central stalk subunits to proton translocation. Component of the F(0) channel, it forms part of the peripheral stalk, linking F(1) to F(0). The sequence is that of ATP synthase subunit b from Saccharophagus degradans (strain 2-40 / ATCC 43961 / DSM 17024).